The following is a 131-amino-acid chain: Small ribosomal subunit protein uS8 (131 aa).

This sequence belongs to the universal ribosomal protein uS8 family. Part of the 30S ribosomal subunit. Contacts proteins S5 and S12.

One of the primary rRNA binding proteins, it binds directly to 16S rRNA central domain where it helps coordinate assembly of the platform of the 30S subunit. This Polaromonas sp. (strain JS666 / ATCC BAA-500) protein is Small ribosomal subunit protein uS8.